Here is a 1178-residue protein sequence, read N- to C-terminus: DNA-directed RNA polymerase subunit beta' (1178 aa).

4 residues coordinate Zn(2+): Cys-60, Cys-62, Cys-75, and Cys-78. Mg(2+) contacts are provided by Asp-450, Asp-452, and Asp-454. The Zn(2+) site is built by Cys-795, Cys-869, Cys-876, and Cys-879.

This sequence belongs to the RNA polymerase beta' chain family. In terms of assembly, the RNAP catalytic core consists of 2 alpha, 1 beta, 1 beta' and 1 omega subunit. When a sigma factor is associated with the core the holoenzyme is formed, which can initiate transcription. It depends on Mg(2+) as a cofactor. The cofactor is Zn(2+).

The catalysed reaction is RNA(n) + a ribonucleoside 5'-triphosphate = RNA(n+1) + diphosphate. Functionally, DNA-dependent RNA polymerase catalyzes the transcription of DNA into RNA using the four ribonucleoside triphosphates as substrates. The polypeptide is DNA-directed RNA polymerase subunit beta' (Clostridium botulinum (strain Langeland / NCTC 10281 / Type F)).